The chain runs to 186 residues: Elongation factor P (186 aa).

The protein belongs to the elongation factor P family.

It is found in the cytoplasm. The protein operates within protein biosynthesis; polypeptide chain elongation. Its function is as follows. Involved in peptide bond synthesis. Stimulates efficient translation and peptide-bond synthesis on native or reconstituted 70S ribosomes in vitro. Probably functions indirectly by altering the affinity of the ribosome for aminoacyl-tRNA, thus increasing their reactivity as acceptors for peptidyl transferase. The chain is Elongation factor P from Streptococcus sanguinis (strain SK36).